A 510-amino-acid polypeptide reads, in one-letter code: G-protein coupled receptor dmsr-1 (510 aa).

Over 1 to 35 the chain is Extracellular; that stretch reads MEFTECKTTFIHLPDKSFLYDVFVSVYNFYHPIHA. A helical membrane pass occupies residues 36–56; the sequence is YLSIFLCVLGTIANFCNIVVL. At 57-64 the chain is on the cytoplasmic side; the sequence is TRRTMRTP. The chain crosses the membrane as a helical span at residues 65–85; sequence VNMILTAMASCDTVVLFSNLI. Over 86-107 the chain is Extracellular; the sequence is YTTHYSFVAFKFCHPKHWSYSW. The helical transmembrane segment at 108–128 threads the bilayer; that stretch reads ALFLIAHAHLSLVAHSSSVWL. At 129-155 the chain is on the cytoplasmic side; it reads SVMLALVRYVTLRSRGNMGGMQVTLRH. The chain crosses the membrane as a helical span at residues 156-176; it reads SYYAVAVTVSLVAVLNAPNFL. Residues 177-223 are Extracellular-facing; it reads NYKINEQPLNETCTDLDPMFWNSPAYLPGIADIAKANSCLVFRLSYW. N-linked (GlcNAc...) asparagine glycosylation occurs at N186. The helical transmembrane segment at 224–244 threads the bilayer; sequence ISGMVFKVLPCALLSLFVWLL. The Cytoplasmic segment spans residues 245-307; the sequence is LRILREVREN…GERVDRTTHM (63 aa). The chain crosses the membrane as a helical span at residues 308 to 328; sequence LLAIVAVMLVTELPQGIMAVL. The Extracellular portion of the chain corresponds to 329–343; it reads SGMCSEEFRIYIYNN. A helical membrane pass occupies residues 344–364; that stretch reads LGDILDLFSLCGSCCSFIIYC. Residues 365 to 510 are Cytoplasmic-facing; the sequence is SMSGQFRNEF…DGIRGHFQNI (146 aa). The interval 452 to 510 is disordered; sequence GCDSITPCSPMPTSFPSSPLPPIRSGEDESTDETSHLLNSSGPNSTASADGIRGHFQNI. Positions 487 to 499 are enriched in polar residues; that stretch reads HLLNSSGPNSTAS.

It belongs to the G-protein coupled receptor 1 family. Expressed in head neurons including the RID neuron and the paired AIY neurons, and in tail neurons including the paired PHA and PHB neurons. Not expressed in AVE and AVA neurons.

Its subcellular location is the cell membrane. G-protein coupled receptor. In terms of biological role, G-protein coupled receptor for flp-13 RFamide neuropeptides in vitro. Upon activation by flp-13 RFamide neuropeptides, promotes sleep in response to cellular stress also known as stress-induced sleep (SIS), probably by inhibiting the activity of wake-promoting neurons. The chain is G-protein coupled receptor dmsr-1 from Caenorhabditis elegans.